A 233-amino-acid chain; its full sequence is Lipoprotein-releasing system ATP-binding protein LolD (233 aa).

The 228-residue stretch at 6–233 folds into the ABC transporter domain; sequence LQCDNLCKRY…TAELSLMGAE (228 aa). 42 to 49 serves as a coordination point for ATP; it reads GSSGSGKS.

It belongs to the ABC transporter superfamily. Lipoprotein translocase (TC 3.A.1.125) family. The complex is composed of two ATP-binding proteins (LolD) and two transmembrane proteins (LolC and LolE).

The protein localises to the cell inner membrane. Part of the ABC transporter complex LolCDE involved in the translocation of mature outer membrane-directed lipoproteins, from the inner membrane to the periplasmic chaperone, LolA. Responsible for the formation of the LolA-lipoprotein complex in an ATP-dependent manner. The sequence is that of Lipoprotein-releasing system ATP-binding protein LolD from Shigella flexneri.